The sequence spans 256 residues: Deoxyribose-phosphate aldolase (256 aa).

Aspartate 102 (proton donor/acceptor) is an active-site residue. Residue lysine 165 is the Schiff-base intermediate with acetaldehyde of the active site. The Proton donor/acceptor role is filled by lysine 197.

The protein belongs to the DeoC/FbaB aldolase family. DeoC type 2 subfamily.

It localises to the cytoplasm. The enzyme catalyses 2-deoxy-D-ribose 5-phosphate = D-glyceraldehyde 3-phosphate + acetaldehyde. It participates in carbohydrate degradation; 2-deoxy-D-ribose 1-phosphate degradation; D-glyceraldehyde 3-phosphate and acetaldehyde from 2-deoxy-alpha-D-ribose 1-phosphate: step 2/2. Its function is as follows. Catalyzes a reversible aldol reaction between acetaldehyde and D-glyceraldehyde 3-phosphate to generate 2-deoxy-D-ribose 5-phosphate. In Shewanella baltica (strain OS223), this protein is Deoxyribose-phosphate aldolase.